A 131-amino-acid chain; its full sequence is Methylglyoxal synthase (131 aa).

One can recognise an MGS-like domain in the interval 1–131 (MKIALIAHDK…GDLDYRKLRK (131 aa)). Substrate contacts are provided by residues H8, K12, 34 to 37 (TGTT), and 54 to 55 (SG). The active-site Proton donor/acceptor is the D60. A substrate-binding site is contributed by H87.

This sequence belongs to the methylglyoxal synthase family.

The enzyme catalyses dihydroxyacetone phosphate = methylglyoxal + phosphate. Functionally, catalyzes the formation of methylglyoxal from dihydroxyacetone phosphate. The chain is Methylglyoxal synthase from Bacillus cereus (strain ATCC 14579 / DSM 31 / CCUG 7414 / JCM 2152 / NBRC 15305 / NCIMB 9373 / NCTC 2599 / NRRL B-3711).